The primary structure comprises 156 residues: MPRRREVPKREILPDPKFGSVELAKFMNVVMLDGKKAVAERIIYGALEQVQVKTGKDAIEVFNLAINNIKPIVEVKSRRVGGANYQVPVEVRPVRRLALAMRWLREAAKKRGEKSMDLRLAGELIDASEGRGAAMKKREDTHKMAEANKAFSHFRW.

It belongs to the universal ribosomal protein uS7 family. In terms of assembly, part of the 30S ribosomal subunit. Contacts proteins S9 and S11.

In terms of biological role, one of the primary rRNA binding proteins, it binds directly to 16S rRNA where it nucleates assembly of the head domain of the 30S subunit. Is located at the subunit interface close to the decoding center, probably blocks exit of the E-site tRNA. The polypeptide is Small ribosomal subunit protein uS7 (Bordetella bronchiseptica (strain ATCC BAA-588 / NCTC 13252 / RB50) (Alcaligenes bronchisepticus)).